A 119-amino-acid chain; its full sequence is Large ribosomal subunit protein uL14 (119 aa).

This sequence belongs to the universal ribosomal protein uL14 family. Part of the 50S ribosomal subunit. Forms a cluster with proteins L3 and L19. In the 70S ribosome, L14 and L19 interact and together make contacts with the 16S rRNA in bridges B5 and B8.

Binds to 23S rRNA. Forms part of two intersubunit bridges in the 70S ribosome. In Ehrlichia canis (strain Jake), this protein is Large ribosomal subunit protein uL14.